The sequence spans 235 residues: Small ribosomal subunit protein eS4 (235 aa).

Positions 43 to 114 constitute an S4 RNA-binding domain; that stretch reads IPLLLIVRDM…DPHRFLRLIE (72 aa).

Belongs to the eukaryotic ribosomal protein eS4 family.

The chain is Small ribosomal subunit protein eS4 from Korarchaeum cryptofilum (strain OPF8).